A 335-amino-acid polypeptide reads, in one-letter code: Ribosomal RNA large subunit methyltransferase F (335 aa).

The protein belongs to the methyltransferase superfamily. METTL16/RlmF family.

It localises to the cytoplasm. It catalyses the reaction adenosine(1618) in 23S rRNA + S-adenosyl-L-methionine = N(6)-methyladenosine(1618) in 23S rRNA + S-adenosyl-L-homocysteine + H(+). Functionally, specifically methylates the adenine in position 1618 of 23S rRNA. This Yersinia enterocolitica serotype O:8 / biotype 1B (strain NCTC 13174 / 8081) protein is Ribosomal RNA large subunit methyltransferase F.